Consider the following 151-residue polypeptide: Ribosome maturation factor RimP (151 aa).

This sequence belongs to the RimP family.

It is found in the cytoplasm. Its function is as follows. Required for maturation of 30S ribosomal subunits. The chain is Ribosome maturation factor RimP from Vibrio campbellii (strain ATCC BAA-1116).